Here is a 289-residue protein sequence, read N- to C-terminus: NAD kinase (289 aa).

The Proton acceptor role is filled by Asp68. Residues 68–69 (DG), Lys73, 142–143 (ND), Arg153, Asp172, 183–188 (TAYSLS), and Gln243 each bind NAD(+).

The protein belongs to the NAD kinase family. It depends on a divalent metal cation as a cofactor.

The protein resides in the cytoplasm. It carries out the reaction NAD(+) + ATP = ADP + NADP(+) + H(+). Its function is as follows. Involved in the regulation of the intracellular balance of NAD and NADP, and is a key enzyme in the biosynthesis of NADP. Catalyzes specifically the phosphorylation on 2'-hydroxyl of the adenosine moiety of NAD to yield NADP. The polypeptide is NAD kinase (Acetivibrio thermocellus (strain ATCC 27405 / DSM 1237 / JCM 9322 / NBRC 103400 / NCIMB 10682 / NRRL B-4536 / VPI 7372) (Clostridium thermocellum)).